We begin with the raw amino-acid sequence, 118 residues long: Actin depolymerizing factor ADF (118 aa).

The ADF-H domain occupies 4–118 (GMGVDENCVA…HEMGDLAPLA (115 aa)).

The protein belongs to the actin-binding proteins ADF family. In terms of assembly, interacts with ACT1 (G-actin); the interaction results in inhibition of actin polymerization. Interacts with DPA; the interaction enhances ADF activity in disassembly of filamentous actin and inhibition of actin polymerization.

The protein resides in the cytoplasm. Inhibits actin polymerization. Promotes actin depolymerization. Strongly sequesters actin monomers (G-actin). Weakly severs actin filaments (F-actin). This is Actin depolymerizing factor ADF from Toxoplasma gondii.